A 247-amino-acid chain; its full sequence is Probable transcriptional regulatory protein PMT_1423 (247 aa).

This sequence belongs to the TACO1 family.

The protein localises to the cytoplasm. This is Probable transcriptional regulatory protein PMT_1423 from Prochlorococcus marinus (strain MIT 9313).